A 29-amino-acid chain; its full sequence is Cyclotide psyleio C (29 aa).

The cyclopeptide (Gly-Arg) cross-link spans 1 to 29 (GDLPVCGETCFGGTCNTPGCVCAWPVCTR). Disulfide bonds link Cys6–Cys20, Cys10–Cys22, and Cys15–Cys27.

This is a cyclic peptide.

Functionally, probably participates in a plant defense mechanism. The chain is Cyclotide psyleio C from Psychotria leiocarpa.